A 181-amino-acid polypeptide reads, in one-letter code: ATP-dependent protease subunit HslV (181 aa).

Residue Thr5 is part of the active site. 3 residues coordinate Na(+): Ala161, Cys164, and Thr167.

It belongs to the peptidase T1B family. HslV subfamily. A double ring-shaped homohexamer of HslV is capped on each side by a ring-shaped HslU homohexamer. The assembly of the HslU/HslV complex is dependent on binding of ATP.

The protein resides in the cytoplasm. It carries out the reaction ATP-dependent cleavage of peptide bonds with broad specificity.. Allosterically activated by HslU binding. Functionally, protease subunit of a proteasome-like degradation complex believed to be a general protein degrading machinery. This chain is ATP-dependent protease subunit HslV, found in Sulfurimonas denitrificans (strain ATCC 33889 / DSM 1251) (Thiomicrospira denitrificans (strain ATCC 33889 / DSM 1251)).